The sequence spans 944 residues: Spindle pole body component 110 (944 aa).

Thr-18 carries the phosphothreonine modification. The interval 23 to 110 is disordered; the sequence is IKSKRNTTQT…RKRNLIDDLK (88 aa). Residues 28–46 show a composition bias toward polar residues; that stretch reads NTTQTQVVSPTKVPNANNG. The Nuclear localization signal motif lies at 54-59; the sequence is KKRQRR. The residue at position 60 (Ser-60) is a Phosphoserine; by MPS1. Thr-64 and Thr-68 each carry phosphothreonine; by MPS1. A compositionally biased stretch (polar residues) spans 67-78; sequence STRLFSEASQFD. Ser-80 carries the post-translational modification Phosphoserine. Basic and acidic residues predominate over residues 96 to 110; sequence NVDKSRKRNLIDDLK. The stretch at 164–791 forms a coiled coil; that stretch reads EIKSLKHEIK…NRRLEERLIL (628 aa). Residue Ser-529 is modified to Phosphoserine. Short sequence motifs (nuclear localization signal) lie at residues 726–731 and 742–747; these read KEKYKR and RLRREK. Residues 900 to 927 are calmodulin-binding; that stretch reads SFKTVALLVLACVRMKRIAFYRRSDDNR.

The protein belongs to the SPC110 family. As to quaternary structure, homodimer. Component of the SPC110 complex containing at least CMD1, SPC29 and SCP110. Interacts with SPC97 and SPC98.

The protein resides in the nucleus. It is found in the cytoplasm. The protein localises to the cytoskeleton. Its subcellular location is the microtubule organizing center. It localises to the spindle pole body. Functionally, component of the spindle pole body (SPB) required for the proper execution of spindle pole body (SPB) duplication. Potential role in cross-linking filaments or anchoring other molecules. It is essential for growth. The protein is Spindle pole body component 110 (SPC110) of Saccharomyces cerevisiae (strain ATCC 204508 / S288c) (Baker's yeast).